Here is a 477-residue protein sequence, read N- to C-terminus: Ribulose bisphosphate carboxylase large chain (477 aa).

The propeptide occupies 1–2 (MS). Pro3 carries the N-acetylproline modification. Lys14 is subject to N6,N6,N6-trimethyllysine. Positions 123 and 173 each coordinate substrate. Lys175 (proton acceptor) is an active-site residue. Residue Lys177 participates in substrate binding. Positions 201, 203, and 204 each coordinate Mg(2+). Lys201 carries the post-translational modification N6-carboxylysine. Residue His294 is the Proton acceptor of the active site. Substrate contacts are provided by Arg295, His327, and Ser379.

This sequence belongs to the RuBisCO large chain family. Type I subfamily. Heterohexadecamer of 8 large chains and 8 small chains; disulfide-linked. The disulfide link is formed within the large subunit homodimers. The cofactor is Mg(2+). The disulfide bond which can form in the large chain dimeric partners within the hexadecamer appears to be associated with oxidative stress and protein turnover.

It localises to the plastid. The protein localises to the chloroplast. The enzyme catalyses 2 (2R)-3-phosphoglycerate + 2 H(+) = D-ribulose 1,5-bisphosphate + CO2 + H2O. The catalysed reaction is D-ribulose 1,5-bisphosphate + O2 = 2-phosphoglycolate + (2R)-3-phosphoglycerate + 2 H(+). In terms of biological role, ruBisCO catalyzes two reactions: the carboxylation of D-ribulose 1,5-bisphosphate, the primary event in carbon dioxide fixation, as well as the oxidative fragmentation of the pentose substrate in the photorespiration process. Both reactions occur simultaneously and in competition at the same active site. The protein is Ribulose bisphosphate carboxylase large chain of Oryza nivara (Indian wild rice).